The sequence spans 458 residues: tRNA modification GTPase MnmE (458 aa).

Arginine 22, glutamate 84, and arginine 123 together coordinate (6S)-5-formyl-5,6,7,8-tetrahydrofolate. The region spanning 220 to 379 (GIATAIIGRP…LEKAIADLFF (160 aa)) is the TrmE-type G domain. Asparagine 230 is a K(+) binding site. GTP is bound by residues 230 to 235 (NVGKSS), 249 to 255 (TDIAGTT), and 274 to 277 (DTAG). Residue serine 234 coordinates Mg(2+). Threonine 249, isoleucine 251, and threonine 254 together coordinate K(+). Threonine 255 contributes to the Mg(2+) binding site. Lysine 458 provides a ligand contact to (6S)-5-formyl-5,6,7,8-tetrahydrofolate.

It belongs to the TRAFAC class TrmE-Era-EngA-EngB-Septin-like GTPase superfamily. TrmE GTPase family. Homodimer. Heterotetramer of two MnmE and two MnmG subunits. The cofactor is K(+).

The protein resides in the cytoplasm. In terms of biological role, exhibits a very high intrinsic GTPase hydrolysis rate. Involved in the addition of a carboxymethylaminomethyl (cmnm) group at the wobble position (U34) of certain tRNAs, forming tRNA-cmnm(5)s(2)U34. This Bacillus cereus (strain ZK / E33L) protein is tRNA modification GTPase MnmE.